Consider the following 266-residue polypeptide: Thymidylate synthase (266 aa).

Residue R24 participates in dUMP binding. H54 contacts (6R)-5,10-methylene-5,6,7,8-tetrahydrofolate. 129–130 (RR) provides a ligand contact to dUMP. The active-site Nucleophile is C149. Residues 169 to 172 (RSAD), N180, and 210 to 212 (HIY) each bind dUMP. D172 lines the (6R)-5,10-methylene-5,6,7,8-tetrahydrofolate pocket. A265 contributes to the (6R)-5,10-methylene-5,6,7,8-tetrahydrofolate binding site.

Belongs to the thymidylate synthase family. Bacterial-type ThyA subfamily. As to quaternary structure, homodimer.

The protein resides in the cytoplasm. The catalysed reaction is dUMP + (6R)-5,10-methylene-5,6,7,8-tetrahydrofolate = 7,8-dihydrofolate + dTMP. It participates in pyrimidine metabolism; dTTP biosynthesis. Functionally, catalyzes the reductive methylation of 2'-deoxyuridine-5'-monophosphate (dUMP) to 2'-deoxythymidine-5'-monophosphate (dTMP) while utilizing 5,10-methylenetetrahydrofolate (mTHF) as the methyl donor and reductant in the reaction, yielding dihydrofolate (DHF) as a by-product. This enzymatic reaction provides an intracellular de novo source of dTMP, an essential precursor for DNA biosynthesis. The polypeptide is Thymidylate synthase (Mycobacterium avium (strain 104)).